Here is a 153-residue protein sequence, read N- to C-terminus: D-aminoacyl-tRNA deacylase (153 aa).

The short motif at 142-143 is the Gly-cisPro motif, important for rejection of L-amino acids element; that stretch reads GP.

Belongs to the DTD family. As to quaternary structure, homodimer.

The protein localises to the cytoplasm. The enzyme catalyses glycyl-tRNA(Ala) + H2O = tRNA(Ala) + glycine + H(+). The catalysed reaction is a D-aminoacyl-tRNA + H2O = a tRNA + a D-alpha-amino acid + H(+). An aminoacyl-tRNA editing enzyme that deacylates mischarged D-aminoacyl-tRNAs. Also deacylates mischarged glycyl-tRNA(Ala), protecting cells against glycine mischarging by AlaRS. Acts via tRNA-based rather than protein-based catalysis; rejects L-amino acids rather than detecting D-amino acids in the active site. By recycling D-aminoacyl-tRNA to D-amino acids and free tRNA molecules, this enzyme counteracts the toxicity associated with the formation of D-aminoacyl-tRNA entities in vivo and helps enforce protein L-homochirality. This Acidovorax ebreus (strain TPSY) (Diaphorobacter sp. (strain TPSY)) protein is D-aminoacyl-tRNA deacylase.